A 375-amino-acid chain; its full sequence is Pectate lyase B (375 aa).

A signal peptide spans M1–A22. C93 and C176 are disulfide-bonded. Residues D150, D152, E187, and D191 each coordinate Ca(2+). The active site involves R240. An intrachain disulfide couples C351 to C374.

The protein belongs to the polysaccharide lyase 1 family. PLADES subfamily. Ca(2+) serves as cofactor.

The protein resides in the secreted. The enzyme catalyses Eliminative cleavage of (1-&gt;4)-alpha-D-galacturonan to give oligosaccharides with 4-deoxy-alpha-D-galact-4-enuronosyl groups at their non-reducing ends.. It functions in the pathway glycan metabolism; pectin degradation; 2-dehydro-3-deoxy-D-gluconate from pectin: step 2/5. In terms of biological role, involved in maceration and soft-rotting of plant tissue. The sequence is that of Pectate lyase B (pelB) from Dickeya chrysanthemi (Pectobacterium chrysanthemi).